The sequence spans 330 residues: 2-phospho-L-lactate transferase (330 aa).

Aspartate 49 serves as a coordination point for 7,8-didemethyl-8-hydroxy-5-deazariboflavin.

This sequence belongs to the CofD family. As to quaternary structure, homodimer. Mg(2+) serves as cofactor.

It catalyses the reaction (2S)-lactyl-2-diphospho-5'-guanosine + 7,8-didemethyl-8-hydroxy-5-deazariboflavin = oxidized coenzyme F420-0 + GMP + H(+). It functions in the pathway cofactor biosynthesis; coenzyme F420 biosynthesis. Its function is as follows. Catalyzes the transfer of the 2-phospholactate moiety from (2S)-lactyl-2-diphospho-5'-guanosine to 7,8-didemethyl-8-hydroxy-5-deazariboflavin (FO) with the formation of oxidized coenzyme F420-0 and GMP. The protein is 2-phospho-L-lactate transferase of Haloarcula marismortui (strain ATCC 43049 / DSM 3752 / JCM 8966 / VKM B-1809) (Halobacterium marismortui).